The primary structure comprises 281 residues: Phosphatidylglycerol--prolipoprotein diacylglyceryl transferase (281 aa).

Transmembrane regions (helical) follow at residues Val23–Trp43, Phe71–Tyr91, Trp107–Phe127, and Ile133–Val153. Arg154 serves as a coordination point for a 1,2-diacyl-sn-glycero-3-phospho-(1'-sn-glycerol). Helical transmembrane passes span Leu189–Gly209, Gly217–Phe237, and Leu247–Leu267.

The protein belongs to the Lgt family.

The protein localises to the cell inner membrane. It carries out the reaction L-cysteinyl-[prolipoprotein] + a 1,2-diacyl-sn-glycero-3-phospho-(1'-sn-glycerol) = an S-1,2-diacyl-sn-glyceryl-L-cysteinyl-[prolipoprotein] + sn-glycerol 1-phosphate + H(+). Its pathway is protein modification; lipoprotein biosynthesis (diacylglyceryl transfer). Catalyzes the transfer of the diacylglyceryl group from phosphatidylglycerol to the sulfhydryl group of the N-terminal cysteine of a prolipoprotein, the first step in the formation of mature lipoproteins. In Brucella abortus (strain S19), this protein is Phosphatidylglycerol--prolipoprotein diacylglyceryl transferase.